The primary structure comprises 154 residues: Metallothiol transferase FosB (154 aa).

The VOC domain occupies 8 to 123 (GINHLLFSVS…DGHKFELHTG (116 aa)). Mg(2+)-binding residues include histidine 11, histidine 70, and glutamate 119. Glutamate 119 functions as the Proton donor/acceptor in the catalytic mechanism.

The protein belongs to the fosfomycin resistance protein family. FosB subfamily. Homodimer. Mg(2+) is required as a cofactor.

It localises to the cytoplasm. Its function is as follows. Metallothiol transferase which confers resistance to fosfomycin by catalyzing the addition of a thiol cofactor to fosfomycin. L-cysteine is probably the physiological thiol donor. The chain is Metallothiol transferase FosB from Bacillus licheniformis (strain ATCC 14580 / DSM 13 / JCM 2505 / CCUG 7422 / NBRC 12200 / NCIMB 9375 / NCTC 10341 / NRRL NRS-1264 / Gibson 46).